A 318-amino-acid chain; its full sequence is Ribose-phosphate pyrophosphokinase 1 (318 aa).

96–101 (RQDKKD) provides a ligand contact to ATP. Residues aspartate 128, histidine 130, aspartate 139, and aspartate 143 each coordinate Mg(2+). Histidine 130 serves as a coordination point for ATP. Residues 212-227 (KDRVAILVDDMADTCG) are binding of phosphoribosylpyrophosphate.

This sequence belongs to the ribose-phosphate pyrophosphokinase family. As to quaternary structure, homodimer. The active form is probably a hexamer composed of 3 homodimers. Mg(2+) is required as a cofactor.

The enzyme catalyses D-ribose 5-phosphate + ATP = 5-phospho-alpha-D-ribose 1-diphosphate + AMP + H(+). The protein operates within metabolic intermediate biosynthesis; 5-phospho-alpha-D-ribose 1-diphosphate biosynthesis; 5-phospho-alpha-D-ribose 1-diphosphate from D-ribose 5-phosphate (route I): step 1/1. With respect to regulation, activated by magnesium and inorganic phosphate. Catalyzes the synthesis of phosphoribosylpyrophosphate (PRPP) that is essential for nucleotide synthesis. In Bos taurus (Bovine), this protein is Ribose-phosphate pyrophosphokinase 1 (PRPS1).